The chain runs to 113 residues: U11-theraphotoxin-Hhn1a (113 aa).

An N-terminal signal peptide occupies residues 1–21 (MNTVRVTFLLVFVLPVSLGQA). The propeptide occupies 22–74 (DKDENRMEMQEKTEQGKSYLDFAENLLLQKLEELEAKLLEEDSEESRNSRQKR). The span at 60–69 (LEEDSEESRN) shows a compositional bias: basic and acidic residues. Positions 60-83 (LEEDSEESRNSRQKRCIGEGVPCD) are disordered. 3 disulfides stabilise this stretch: Cys75–Cys90, Cys82–Cys95, and Cys89–Cys110.

It belongs to the neurotoxin 14 (magi-1) family. 01 (HNTX-16) subfamily. As to expression, expressed by the venom gland.

It localises to the secreted. In terms of biological role, probable ion channel inhibitor. This chain is U11-theraphotoxin-Hhn1a, found in Cyriopagopus hainanus (Chinese bird spider).